Here is a 382-residue protein sequence, read N- to C-terminus: Nuclear hormone receptor family member nhr-106 (382 aa).

A DNA-binding region (nuclear receptor) is located at residues 2 to 78; that stretch reads QTTCEICEVP…MGMMPEKVKV (77 aa). NR C4-type zinc fingers lie at residues 5–25 and 42–61; these read CEICEVPAHGIHFGAITCRGC and CKYSSNCTNFTGKFPQCKSC. In terms of domain architecture, NR LBD spans 110-380; sequence DVSNLITRGL…FSNPEMFIDS (271 aa).

This sequence belongs to the nuclear hormone receptor family.

The protein resides in the nucleus. In terms of biological role, orphan nuclear receptor. This chain is Nuclear hormone receptor family member nhr-106 (nhr-106), found in Caenorhabditis elegans.